Reading from the N-terminus, the 241-residue chain is MEIIPAIDIKDGRCVRLYQGDFAQMTVYADDPVAVARSWEAQGATRLHLVDLDGARAGHPQNVDAILAITQAVQIPVQLGGGLRREQDVESALALGVERVIIGTAAIAETDLVARLLDRFGEQIVIGIDARNGLVATDGWTVTSSVKATVLAEQMANLGARRIIYTDISRDGALSGPNFAALSELITPHGPAIIASGGIASIDHVRQLAQLGVEGAIIGKALYVGAVKLAEAMAVAHMTNV.

Residue Asp-8 is the Proton acceptor of the active site. The Proton donor role is filled by Asp-129.

This sequence belongs to the HisA/HisF family.

It localises to the cytoplasm. It carries out the reaction 1-(5-phospho-beta-D-ribosyl)-5-[(5-phospho-beta-D-ribosylamino)methylideneamino]imidazole-4-carboxamide = 5-[(5-phospho-1-deoxy-D-ribulos-1-ylimino)methylamino]-1-(5-phospho-beta-D-ribosyl)imidazole-4-carboxamide. The protein operates within amino-acid biosynthesis; L-histidine biosynthesis; L-histidine from 5-phospho-alpha-D-ribose 1-diphosphate: step 4/9. The sequence is that of 1-(5-phosphoribosyl)-5-[(5-phosphoribosylamino)methylideneamino] imidazole-4-carboxamide isomerase from Chloroflexus aurantiacus (strain ATCC 29364 / DSM 637 / Y-400-fl).